Here is a 308-residue protein sequence, read N- to C-terminus: Aspartate carbamoyltransferase catalytic subunit (308 aa).

Residues arginine 57 and threonine 58 each coordinate carbamoyl phosphate. Lysine 86 is an L-aspartate binding site. Arginine 107, histidine 135, and glutamine 138 together coordinate carbamoyl phosphate. Residues arginine 168 and arginine 228 each contribute to the L-aspartate site. Carbamoyl phosphate-binding residues include leucine 267 and proline 268.

Belongs to the aspartate/ornithine carbamoyltransferase superfamily. ATCase family. In terms of assembly, heterododecamer (2C3:3R2) of six catalytic PyrB chains organized as two trimers (C3), and six regulatory PyrI chains organized as three dimers (R2).

The catalysed reaction is carbamoyl phosphate + L-aspartate = N-carbamoyl-L-aspartate + phosphate + H(+). It functions in the pathway pyrimidine metabolism; UMP biosynthesis via de novo pathway; (S)-dihydroorotate from bicarbonate: step 2/3. Its function is as follows. Catalyzes the condensation of carbamoyl phosphate and aspartate to form carbamoyl aspartate and inorganic phosphate, the committed step in the de novo pyrimidine nucleotide biosynthesis pathway. The protein is Aspartate carbamoyltransferase catalytic subunit of Leptospira borgpetersenii serovar Hardjo-bovis (strain JB197).